A 91-amino-acid chain; its full sequence is Small ribosomal subunit protein uS15 (91 aa).

The protein belongs to the universal ribosomal protein uS15 family. In terms of assembly, part of the 30S ribosomal subunit. Forms a bridge to the 50S subunit in the 70S ribosome, contacting the 23S rRNA.

One of the primary rRNA binding proteins, it binds directly to 16S rRNA where it helps nucleate assembly of the platform of the 30S subunit by binding and bridging several RNA helices of the 16S rRNA. Its function is as follows. Forms an intersubunit bridge (bridge B4) with the 23S rRNA of the 50S subunit in the ribosome. The chain is Small ribosomal subunit protein uS15 from Rickettsia prowazekii (strain Madrid E).